We begin with the raw amino-acid sequence, 590 residues long: UvrABC system protein C (590 aa).

The 78-residue stretch at 14–91 (DQPGCYLMKD…IKKHDPKYNV (78 aa)) folds into the GIY-YIG domain. One can recognise a UVR domain in the interval 196–231 (NEVKKELEEKMHEAAENLEFERAKELRDQIAHIEST).

It belongs to the UvrC family. In terms of assembly, interacts with UvrB in an incision complex.

The protein resides in the cytoplasm. Functionally, the UvrABC repair system catalyzes the recognition and processing of DNA lesions. UvrC both incises the 5' and 3' sides of the lesion. The N-terminal half is responsible for the 3' incision and the C-terminal half is responsible for the 5' incision. This is UvrABC system protein C from Bacillus subtilis (strain 168).